Consider the following 87-residue polypeptide: Small ribosomal subunit protein uS17 (87 aa).

It belongs to the universal ribosomal protein uS17 family. In terms of assembly, part of the 30S ribosomal subunit.

In terms of biological role, one of the primary rRNA binding proteins, it binds specifically to the 5'-end of 16S ribosomal RNA. The chain is Small ribosomal subunit protein uS17 from Neisseria gonorrhoeae (strain ATCC 700825 / FA 1090).